Consider the following 482-residue polypeptide: DnaJ protein P58IPK homolog (482 aa).

The first 42 residues, 1-42 (MDLFRVWSGMDFLAWRGMAYTLLLLNFVFACQLLLLQPLVSA), serve as a signal peptide directing secretion. TPR repeat units lie at residues 50-83 (AAEL…DPAL), 85-117 (EAYF…KSGD), 130-164 (AKSA…SPAC), 166-198 (KAKL…DENN), 199-232 (LEAL…DPEH), 245-278 (LLKK…DPEH), 283-316 (VHLY…DAEL), and 318-350 (EALH…SQDM). The J domain maps to 370–436 (DWYKILGISR…DKRARFDRGE (67 aa)).

As to quaternary structure, interacts with the helicase domain of the tobamovirus (TMV) and the tobacco etch virus (TEV) replicases. As to expression, expressed in flower buds and flowers.

The protein localises to the endoplasmic reticulum lumen. Functionally, plays an important positive role in viral symptom development and is required for viral multiplication and pathogenesis. This is DnaJ protein P58IPK homolog (P58IPK) from Arabidopsis thaliana (Mouse-ear cress).